The following is a 76-amino-acid chain: Exodeoxyribonuclease 7 small subunit (76 aa).

This sequence belongs to the XseB family. In terms of assembly, heterooligomer composed of large and small subunits.

Its subcellular location is the cytoplasm. It catalyses the reaction Exonucleolytic cleavage in either 5'- to 3'- or 3'- to 5'-direction to yield nucleoside 5'-phosphates.. Its function is as follows. Bidirectionally degrades single-stranded DNA into large acid-insoluble oligonucleotides, which are then degraded further into small acid-soluble oligonucleotides. This is Exodeoxyribonuclease 7 small subunit from Gluconacetobacter diazotrophicus (strain ATCC 49037 / DSM 5601 / CCUG 37298 / CIP 103539 / LMG 7603 / PAl5).